The chain runs to 826 residues: Dolichyl-diphosphooligosaccharide--protein glycosyltransferase subunit STT3B (826 aa).

A disordered region spans residues 1–60 (MAEPSAPESKHKSSLNSSPWSGLMALGNSRHGHHGPGAQCAHKAAGGVAPPKPAPAGLSG). N-acetylalanine is present on Ala2. The Cytoplasmic portion of the chain corresponds to 2-41 (AEPSAPESKHKSSLNSSPWSGLMALGNSRHGHHGPGAQCA). Residues Ser13, Ser18, and Ser29 each carry the phosphoserine modification. The helical transmembrane segment at 42-86 (HKAAGGVAPPKPAPAGLSGGLSQPAGWQSLLSFTILFLAWLAGFS) threads the bilayer. The Lumenal portion of the chain corresponds to 87-173 (SRLFAVIRFE…VHIRDVCVFL (87 aa)). The DXD motif 1 motif lies at 101-103 (EFD). Asp103 lines the Mn(2+) pocket. The chain crosses the membrane as a helical span at residues 174–192 (APTFSGLTSISTFLLTREL). At 193–194 (WN) the chain is on the cytoplasmic side. A helical transmembrane segment spans residues 195–212 (QGAGLLAACFIAIVPGYI). Over 213–223 (SRSVAGSFDNE) the chain is Lumenal. The Mn(2+) site is built by Asp221 and Glu223. The short motif at 221-223 (DNE) is the DXD motif 2 element. The helical transmembrane segment at 224 to 243 (GIAIFALQFTYYLWVKSVKT) threads the bilayer. Topologically, residues 244 to 245 (GS) are cytoplasmic. The chain crosses the membrane as a helical span at residues 246-260 (VFWTMCCCLSYFYMV). Over 261–265 (SAWGG) the chain is Lumenal. Residues 266-282 (YVFIINLIPLHVFVLLL) traverse the membrane as a helical segment. The Cytoplasmic portion of the chain corresponds to 283 to 287 (MQRYS). Residues 288–313 (KRVYIAYSTFYIVGLILSMQIPFVGF) traverse the membrane as a helical segment. Residues 314–321 (QPIRTSEH) lie on the Lumenal side of the membrane. Residues 322–341 (MAAAGVFALLQAYAFLQYLR) form a helical membrane-spanning segment. The Cytoplasmic segment spans residues 342–350 (DRLTKQEFQ). The helical transmembrane segment at 351-371 (TLFFLGVSLAAGAVFLSVIYL) threads the bilayer. At 372–410 (TYTGYIAPWSGRFYSLWDTGYAKIHIPIIASVSEHQPTT) the chain is on the lumenal side. Positions 402 to 405 (SVSE) match the SVSE motif motif. The helical transmembrane segment at 411-433 (WVSFFFDLHILVCTFPAGLWFCI) threads the bilayer. At 434-439 (KNINDE) the chain is on the cytoplasmic side. The chain crosses the membrane as a helical span at residues 440–456 (RVFVALYAISAVYFAGV). The Lumenal portion of the chain corresponds to 457–460 (MVRL). Arg459 is a binding site for dolichyl diphosphooligosaccharide. The helical transmembrane segment at 461 to 482 (MLTLTPVVCMLSAIAFSNVFEH) threads the bilayer. The Cytoplasmic segment spans residues 483-526 (YLGDDMKRENPPVEDSSDEDDKRNPGNLYDKAGKVRKHVTEQEK). A disordered region spans residues 490–512 (RENPPVEDSSDEDDKRNPGNLYD). Phosphoserine occurs at positions 498 and 499. Residues 527 to 552 (TEEGLGPNIKSIVTMLMLMLLMMFAV) form a helical membrane-spanning segment. At 553-826 (HCTWVTSNAY…KGKKISKKTV (274 aa)) the chain is on the lumenal side. Residues 604-606 (WWD) are interacts with target acceptor peptide in protein substrate. The WWDYG motif signature appears at 604–608 (WWDYG). Tyr609 contributes to the dolichyl diphosphooligosaccharide binding site. Asn616 and Asn623 each carry an N-linked (GlcNAc...) asparagine glycan. Residue Asn627 is glycosylated (N-linked (GlcNAc...) (high mannose) asparagine). The N-linked (GlcNAc...) asparagine glycan is linked to Asn641. The DK motif motif lies at 671–678 (DINKFLWM).

The protein belongs to the STT3 family. In terms of assembly, component of the oligosaccharyltransferase (OST) complex. There are 2 OST complexes, OST-A and OST-B, which contain STT3A or STT3B as catalytic subunit, respectively. OST-A and OST-B contain common core subunits RPN1, RPN2, OST48, OST4, DAD1 and TMEM258, and OST-B contains either MAGT1 or TUSC3 as specific accessory subunit. Mg(2+) is required as a cofactor. It depends on Mn(2+) as a cofactor.

It is found in the endoplasmic reticulum. The protein localises to the endoplasmic reticulum membrane. The catalysed reaction is a di-trans,poly-cis-dolichyl diphosphooligosaccharide + L-asparaginyl-[protein] = N(4)-(oligosaccharide-(1-&gt;4)-N-acetyl-beta-D-glucosaminyl-(1-&gt;4)-N-acetyl-beta-D-glucosaminyl)-L-asparaginyl-[protein] + a di-trans,poly-cis-dolichyl diphosphate + H(+). It participates in protein modification; protein glycosylation. Catalytic subunit of the oligosaccharyl transferase (OST) complex that catalyzes the initial transfer of a defined glycan (Glc(3)Man(9)GlcNAc(2) in eukaryotes) from the lipid carrier dolichol-pyrophosphate to an asparagine residue within an Asn-X-Ser/Thr consensus motif in nascent polypeptide chains, the first step in protein N-glycosylation. N-glycosylation occurs cotranslationally and the complex associates with the Sec61 complex at the channel-forming translocon complex that mediates protein translocation across the endoplasmic reticulum (ER). All subunits are required for a maximal enzyme activity. This subunit contains the active site and the acceptor peptide and donor lipid-linked oligosaccharide (LLO) binding pockets. STT3B is present in a small subset of OST complexes and mediates both cotranslational and post-translational N-glycosylation of target proteins: STT3B-containing complexes are required for efficient post-translational glycosylation and while they are less competent than STT3A-containing complexes for cotranslational glycosylation, they have the ability to mediate glycosylation of some nascent sites that are not accessible for STT3A. STT3B-containing complexes also act post-translationally and mediate modification of skipped glycosylation sites in unfolded proteins. Plays a role in ER-associated degradation (ERAD) pathway that mediates ubiquitin-dependent degradation of misfolded endoplasmic reticulum proteins by mediating N-glycosylation of unfolded proteins, which are then recognized by the ERAD pathway and targeted for degradation. This chain is Dolichyl-diphosphooligosaccharide--protein glycosyltransferase subunit STT3B, found in Canis lupus familiaris (Dog).